The following is a 450-amino-acid chain: tRNA modification GTPase MnmE (450 aa).

Arginine 23, glutamate 80, and arginine 123 together coordinate (6S)-5-formyl-5,6,7,8-tetrahydrofolate. The 154-residue stretch at 219–372 (GLHVVLAGKP…LRQRLLQLAG (154 aa)) folds into the TrmE-type G domain. Asparagine 229 provides a ligand contact to K(+). Residues 229-234 (NVGKSS), 248-254 (TPIAGTT), 273-276 (DTAG), and 353-355 (SAR) each bind GTP. Serine 233 provides a ligand contact to Mg(2+). Threonine 248, isoleucine 250, and threonine 253 together coordinate K(+). Position 254 (threonine 254) interacts with Mg(2+). Lysine 450 provides a ligand contact to (6S)-5-formyl-5,6,7,8-tetrahydrofolate.

It belongs to the TRAFAC class TrmE-Era-EngA-EngB-Septin-like GTPase superfamily. TrmE GTPase family. As to quaternary structure, homodimer. Heterotetramer of two MnmE and two MnmG subunits. K(+) is required as a cofactor.

It localises to the cytoplasm. In terms of biological role, exhibits a very high intrinsic GTPase hydrolysis rate. Involved in the addition of a carboxymethylaminomethyl (cmnm) group at the wobble position (U34) of certain tRNAs, forming tRNA-cmnm(5)s(2)U34. The protein is tRNA modification GTPase MnmE of Bordetella parapertussis (strain 12822 / ATCC BAA-587 / NCTC 13253).